Here is a 41-residue protein sequence, read N- to C-terminus: Photosystem I reaction center subunit IX (41 aa).

A helical transmembrane segment spans residues 7 to 27 (YLSTAPVLTLVSLTAVAGLLI).

This sequence belongs to the PsaJ family.

The protein localises to the plastid. Its subcellular location is the chloroplast thylakoid membrane. In terms of biological role, may help in the organization of the PsaE and PsaF subunits. The chain is Photosystem I reaction center subunit IX from Chlorella vulgaris (Green alga).